Reading from the N-terminus, the 430-residue chain is MELKNLIIKTLKEEVVPAMGCTEPVAVALGCAKAKELLGDMDITKAEILVSPNIYKNGLSVGIPNTNEVGLFIAGALGIVAGKSEKDLQVLSGIVEEDVVIAHELLKEEKVTIDIKPTIEKIYVEVNLYAEEGSSTAIIQGRHNEFVYLAQSGNILLNGLQEATSSTKSTNPLFEMKIRDIIKEISELGMDEIGFMLEGLEMNEKIAMEGLKNTSGISVGRTIYENIQKGILADDLMNTAMMLTAAGSDARMSGIRMPVMSSSGSGNNGLTAILPILAYHKKFPVEDRPLAQALAISHMTNSYIKHYIGRLSALCGCGVAAGTGASISIAWLMGADAEKIDGTIKNMIGNLSGMICDGAKVGCALKLATSASAAIQSALLALNGHVIPSKNGIIGDTAEDTIKNLGILSEEGMYFADHTILKVMKAMEGV.

This sequence belongs to the UPF0597 family.

The protein is UPF0597 protein Clos_2050 of Alkaliphilus oremlandii (strain OhILAs) (Clostridium oremlandii (strain OhILAs)).